The following is a 657-amino-acid chain: Threonine--tRNA ligase (657 aa).

A TGS domain is found at 1-70 (MSDHKESTGA…NSDAAIEIIT (70 aa)). A catalytic region spans residues 253–555 (DHRKLGAELE…LIEHTAGNFP (303 aa)). Positions 351, 402, and 532 each coordinate Zn(2+).

This sequence belongs to the class-II aminoacyl-tRNA synthetase family. In terms of assembly, homodimer. Zn(2+) serves as cofactor.

The protein resides in the cytoplasm. It catalyses the reaction tRNA(Thr) + L-threonine + ATP = L-threonyl-tRNA(Thr) + AMP + diphosphate + H(+). Functionally, catalyzes the attachment of threonine to tRNA(Thr) in a two-step reaction: L-threonine is first activated by ATP to form Thr-AMP and then transferred to the acceptor end of tRNA(Thr). Also edits incorrectly charged L-seryl-tRNA(Thr). This chain is Threonine--tRNA ligase, found in Chlorobium chlorochromatii (strain CaD3).